Here is a 176-residue protein sequence, read N- to C-terminus: Ribosome maturation factor RimM (176 aa).

Positions 100-173 constitute a PRC barrel domain; the sequence is EGEFHLLDLV…WLRLTPPPGL (74 aa).

It belongs to the RimM family. Binds ribosomal protein uS19.

The protein resides in the cytoplasm. Functionally, an accessory protein needed during the final step in the assembly of 30S ribosomal subunit, possibly for assembly of the head region. Essential for efficient processing of 16S rRNA. May be needed both before and after RbfA during the maturation of 16S rRNA. It has affinity for free ribosomal 30S subunits but not for 70S ribosomes. The polypeptide is Ribosome maturation factor RimM (Prochlorococcus marinus (strain MIT 9303)).